Consider the following 471-residue polypeptide: MKIKTRFAPSPTGYLHVGGARTALYSWLFARNHGGEFVLRIEDTDLERSTPEAIEAIMDGMNWLSLEWDEGPYYQTKRFDRYNAVIDQMLEEGTAYKCYCSKERLEALREEQMAKGEKPRYDGRCRHSHEHHADDEPCVVRFANPQEGSVVFDDQIRGPIEFSNQELDDLIIRRTDGSPTYNFCVVVDDWDMEITHVIRGEDHINNTPRQINILKALKAPVPVYAHVSMINGDDGKKLSKRHGAVSVMQYRDDGYLPEALLNYLVRLGWSHGDQEIFTREEMIKYFTLNAVSKSASAFNTDKLLWLNHHYINALPPEYVATHLQWHIEQENIDTRNGPQLADLVKLLGERCKTLKEMAQSCRYFYEDFAEFDADARKKHLRPVARQPLEVVRDKLAAITDWPAENVHHAIQATADELEVGMGKVGMPLRVAVTGAGQSPALDVTVHAIGRTRSIERINKALAFIAERENQQ.

Positions 9–19 (PSPTGYLHVGG) match the 'HIGH' region motif. Zn(2+)-binding residues include Cys98, Cys100, Cys125, and His127. The 'KMSKS' region signature appears at 237-241 (KLSKR). Residue Lys240 coordinates ATP.

Belongs to the class-I aminoacyl-tRNA synthetase family. Glutamate--tRNA ligase type 1 subfamily. Monomer. It depends on Zn(2+) as a cofactor.

It localises to the cytoplasm. The enzyme catalyses tRNA(Glu) + L-glutamate + ATP = L-glutamyl-tRNA(Glu) + AMP + diphosphate. Catalyzes the attachment of glutamate to tRNA(Glu) in a two-step reaction: glutamate is first activated by ATP to form Glu-AMP and then transferred to the acceptor end of tRNA(Glu). The protein is Glutamate--tRNA ligase of Shigella boydii serotype 4 (strain Sb227).